Consider the following 251-residue polypeptide: Hydroxyacylglutathione hydrolase (251 aa).

7 residues coordinate Zn(2+): His59, His61, Asp63, His64, His118, Asp141, and His179.

This sequence belongs to the metallo-beta-lactamase superfamily. Glyoxalase II family. As to quaternary structure, monomer. It depends on Zn(2+) as a cofactor.

The enzyme catalyses an S-(2-hydroxyacyl)glutathione + H2O = a 2-hydroxy carboxylate + glutathione + H(+). It functions in the pathway secondary metabolite metabolism; methylglyoxal degradation; (R)-lactate from methylglyoxal: step 2/2. In terms of biological role, thiolesterase that catalyzes the hydrolysis of S-D-lactoyl-glutathione to form glutathione and D-lactic acid. The protein is Hydroxyacylglutathione hydrolase of Prochlorococcus marinus (strain NATL1A).